Consider the following 396-residue polypeptide: LIM/homeobox protein Lhx9 (396 aa).

LIM zinc-binding domains follow at residues 69–130 and 131–193; these read ALCA…RFSV and QRCA…LIQG. 3 disordered regions span residues 248-272, 328-365, and 377-396; these read ENDA…RMRT, RQEN…TDLT, and SSLD…TNLF. A DNA-binding region (homeobox) is located at residues 267-326; it reads TKRMRTSFKHHQLRTMKSYFAINHNPDAKDLKQLAQKTGLTKRVLQVWFQNARAKFRRNV. Residues 352 to 365 show a composition bias toward low complexity; the sequence is LTPPSTATTLTDLT. Residues 384–396 are compositionally biased toward polar residues; it reads SGSPPQTTLTNLF.

It localises to the nucleus. Functionally, may be involved in gonadal development. The sequence is that of LIM/homeobox protein Lhx9 (lhx9) from Danio rerio (Zebrafish).